The chain runs to 239 residues: 1-(5-phosphoribosyl)-5-[(5-phosphoribosylamino)methylideneamino] imidazole-4-carboxamide isomerase (239 aa).

Aspartate 9 acts as the Proton acceptor in catalysis. The active-site Proton donor is the aspartate 131.

The protein belongs to the HisA/HisF family.

It is found in the cytoplasm. It carries out the reaction 1-(5-phospho-beta-D-ribosyl)-5-[(5-phospho-beta-D-ribosylamino)methylideneamino]imidazole-4-carboxamide = 5-[(5-phospho-1-deoxy-D-ribulos-1-ylimino)methylamino]-1-(5-phospho-beta-D-ribosyl)imidazole-4-carboxamide. The protein operates within amino-acid biosynthesis; L-histidine biosynthesis; L-histidine from 5-phospho-alpha-D-ribose 1-diphosphate: step 4/9. In Phocaeicola vulgatus (strain ATCC 8482 / DSM 1447 / JCM 5826 / CCUG 4940 / NBRC 14291 / NCTC 11154) (Bacteroides vulgatus), this protein is 1-(5-phosphoribosyl)-5-[(5-phosphoribosylamino)methylideneamino] imidazole-4-carboxamide isomerase.